We begin with the raw amino-acid sequence, 156 residues long: Glutamine--fructose-6-phosphate aminotransferase [isomerizing] (156 aa).

An SIS domain is found at 4-146 (MAHHIVPARD…VLKGTDVDQP (143 aa)). The For Fru-6P isomerization activity role is filled by lysine 151.

As to quaternary structure, homodimer.

It localises to the cytoplasm. The catalysed reaction is D-fructose 6-phosphate + L-glutamine = D-glucosamine 6-phosphate + L-glutamate. Its function is as follows. Catalyzes the first step in hexosamine metabolism, converting fructose-6P into glucosamine-6P using glutamine as a nitrogen source. The polypeptide is Glutamine--fructose-6-phosphate aminotransferase [isomerizing] (glmS) (Sphingobium yanoikuyae (Sphingomonas yanoikuyae)).